We begin with the raw amino-acid sequence, 375 residues long: MRKVVGSAYTLTSMLKNEGALDEVVELFMEKLGGFADEQAAFDFGEWLEMFSFDGVGTVFFGSPFGFIKDSIDYGGYINAVHTAMPLNSVVAMAPLWLRPVILYGGIAVPRIFKAIMAADGIRKTAVRVTEIAQARSTDSTSRRTDILSRILSIKDERPGSLTINDVHVEMWGAVIAGSDSTSGALRAIFYYLMKTPDTMTRLVKEIDAAFANGSLTHPIRYSQAIKLAYLDAVIQESLRVFPPFAVPMPRYAPAGGLEISGHYLKSGTKIGMNAMVVQFNKEVFGEDAHKFRPERWLESKDRYRAMNKAMLVFGAGTRTCIGKHLSKAEMYKVVPEILRRFTVRMAHDQPWKTRNATFIMQSNVVCRLERRSDE.

Residue cysteine 321 participates in heme binding.

It belongs to the cytochrome P450 family. It depends on heme as a cofactor.

It participates in mycotoxin biosynthesis. Its function is as follows. Cytochrome P450 monooxygenase; part of the gene cluster that mediates the biosynthesis of the host-selective toxins (HSTs) ACR-toxins responsible for brown spot of rough lemon disease by the rough lemon pathotype. ACR-toxins cause uncoupling of mitochondrial oxidative-phosphorylation similar to that of classic protonophore. The structure of the major form of ACR-toxin (ACR-toxin I) consists of an alpha-dihydropyrone ring in a 19-carbon polyalcohol, a typical polyketide structure. Minor toxins were characterized as having a pyrone ring with polyalcohol side chains different in length and showing weaker toxicity. The highly reducing polyketide synthase ACRTS2 has all necessary enzymatic domains for multiple cycles of condensation and beta-keto processing. The cytochrome P450 monooxygenase ACRTS1 has also been shown to be essential for ACR-toxin biosynthesis, however its exact role in the pathway has not been elucidated yet. The sequence is that of Cytochrome P450 monooxygenase ACRTS1 from Alternaria alternata (Alternaria rot fungus).